Reading from the N-terminus, the 173-residue chain is MSYKNVKNLTDDFTTLGHIAWLWANSPLHKEWSISLFTKNILPAIQHDQYILLMRDEFPVAFCSWANLTLTNEVKYVRDVTSLTFEDWNSGERKWLIDWIAPFGDNNTLYRYMRKKFPNEVFRAIRVYPGSTEAKIIHVQGGQINKFTAKKLIQQYQEELIQVLNNHKKIVRG.

Residues H29 and D98 contribute to the active site.

Belongs to the RTX toxin acyltransferase family. As to quaternary structure, homodimer.

The protein resides in the cytoplasm. It catalyses the reaction a fatty acyl-[ACP] + L-lysyl-[protein] = N(6)-(fatty acyl)-L-lysyl-[protein] + holo-[ACP] + H(+). Protein-lysine acyltransferase that catalyzes fatty acylation of the protoxin, thereby converting it to the active toxin. The chain is RTX-III toxin-activating lysine-acyltransferase ApxIIC (apxIIIC) from Actinobacillus pleuropneumoniae (Haemophilus pleuropneumoniae).